The primary structure comprises 447 residues: Protein cereblon (447 aa).

Composition is skewed to acidic residues over residues 1 to 10 (MADDEGEEDP) and 25 to 34 (ESEEEDEMEL). The tract at residues 1 to 47 (MADDEGEEDPGINNMGNLLQVISSESEEEDEMELEDAKTADSESPNI) is disordered. In terms of domain architecture, Lon N-terminal spans 82-322 (IPVLPHVQVM…CELDIMSKCT (241 aa)). Positions 321–429 (CTSLCCKHCP…LTRSALQPRI (109 aa)) constitute a CULT domain. Positions 326 and 329 each coordinate Zn(2+). (S)-thalidomide contacts are provided by W383 and W389. The Zn(2+) site is built by C394 and C397.

This sequence belongs to the CRBN family. Component of a DCX (DDB1-CUL4-X-box) protein ligase complex.

The protein localises to the cytoplasm. It localises to the nucleus. The protein operates within protein modification; protein ubiquitination. Its function is as follows. Substrate recognition component of a DCX (DDB1-CUL4-X-box) E3 protein ligase complex that mediates the ubiquitination and subsequent proteasomal degradation of target proteins, such as MEIS2. Normal degradation of key regulatory proteins is required for normal limb outgrowth and expression of the fibroblast growth factor FGF8. Maintains presynaptic glutamate release and consequently cognitive functions, such as memory and learning, by negatively regulating large-conductance calcium-activated potassium (BK) channels in excitatory neurons. Likely to function by regulating the assembly and neuronal surface expression of BK channels via its interaction with KCNT1. May also be involved in regulating anxiety-like behaviors via a BK channel-independent mechanism. The sequence is that of Protein cereblon (crbn) from Xenopus tropicalis (Western clawed frog).